Consider the following 448-residue polypeptide: Ribonuclease J (448 aa).

His81, His83, Asp85, His86, His151, and Asp173 together coordinate Zn(2+). A substrate-binding site is contributed by 383 to 387 (HVSGH). His409 lines the Zn(2+) pocket.

The protein belongs to the metallo-beta-lactamase superfamily. RNA-metabolizing metallo-beta-lactamase-like family. Archaeal RNase J subfamily. As to quaternary structure, forms homodimers on heating to 60 degrees Celsius which may be the active form. It depends on Zn(2+) as a cofactor.

It is found in the cytoplasm. Its activity is regulated as follows. Inhibited by imidazole. In terms of biological role, a 5'-3' exoribonuclease with a strong reference for 5'-monophosphorylated RNA and no endoribonuclease activty. Also has robust 5'-'3 nuclease activity on single-stranded DNA (exodeoxyribonuclease, exoDNase). May be involved in RNA degradation. This Methanocaldococcus jannaschii (strain ATCC 43067 / DSM 2661 / JAL-1 / JCM 10045 / NBRC 100440) (Methanococcus jannaschii) protein is Ribonuclease J.